A 329-amino-acid chain; its full sequence is Phenylalanine--tRNA ligase alpha subunit (329 aa).

Glu253 lines the Mg(2+) pocket.

This sequence belongs to the class-II aminoacyl-tRNA synthetase family. Phe-tRNA synthetase alpha subunit type 1 subfamily. As to quaternary structure, tetramer of two alpha and two beta subunits. The cofactor is Mg(2+).

The protein resides in the cytoplasm. It carries out the reaction tRNA(Phe) + L-phenylalanine + ATP = L-phenylalanyl-tRNA(Phe) + AMP + diphosphate + H(+). In Coxiella burnetii (strain CbuK_Q154) (Coxiella burnetii (strain Q154)), this protein is Phenylalanine--tRNA ligase alpha subunit.